Here is a 150-residue protein sequence, read N- to C-terminus: Phosphopantetheine adenylyltransferase (150 aa).

Residue Thr-15 participates in substrate binding. ATP is bound by residues 15-16 (TF) and His-23. Residues Ile-80 and Arg-94 each coordinate substrate. ATP contacts are provided by residues 95 to 97 (GIR), Glu-105, and 130 to 136 (LENISSR).

Belongs to the bacterial CoaD family. As to quaternary structure, homohexamer. It depends on Mg(2+) as a cofactor.

It is found in the cytoplasm. It carries out the reaction (R)-4'-phosphopantetheine + ATP + H(+) = 3'-dephospho-CoA + diphosphate. The protein operates within cofactor biosynthesis; coenzyme A biosynthesis; CoA from (R)-pantothenate: step 4/5. Its function is as follows. Reversibly transfers an adenylyl group from ATP to 4'-phosphopantetheine, yielding dephospho-CoA (dPCoA) and pyrophosphate. This is Phosphopantetheine adenylyltransferase from Malacoplasma penetrans (strain HF-2) (Mycoplasma penetrans).